A 383-amino-acid polypeptide reads, in one-letter code: 8-amino-7-oxononanoate synthase (383 aa).

Position 20 (arginine 20) interacts with substrate. 107–108 (GY) is a pyridoxal 5'-phosphate binding site. A substrate-binding site is contributed by histidine 132. Pyridoxal 5'-phosphate is bound by residues serine 178, histidine 206, and threonine 233. Residue lysine 236 is modified to N6-(pyridoxal phosphate)lysine. Threonine 349 provides a ligand contact to substrate.

Belongs to the class-II pyridoxal-phosphate-dependent aminotransferase family. BioF subfamily. Homodimer. The cofactor is pyridoxal 5'-phosphate.

It carries out the reaction 6-carboxyhexanoyl-[ACP] + L-alanine + H(+) = (8S)-8-amino-7-oxononanoate + holo-[ACP] + CO2. Its pathway is cofactor biosynthesis; biotin biosynthesis. Catalyzes the decarboxylative condensation of pimeloyl-[acyl-carrier protein] and L-alanine to produce 8-amino-7-oxononanoate (AON), [acyl-carrier protein], and carbon dioxide. This is 8-amino-7-oxononanoate synthase from Chromobacterium violaceum (strain ATCC 12472 / DSM 30191 / JCM 1249 / CCUG 213 / NBRC 12614 / NCIMB 9131 / NCTC 9757 / MK).